The following is a 672-amino-acid chain: UvrABC system protein B (672 aa).

Positions 26–181 (AGLEDGLAYQ…ILQRLAELQY (156 aa)) constitute a Helicase ATP-binding domain. 39-46 (GVTGSGKT) serves as a coordination point for ATP. The Beta-hairpin motif lies at 92 to 115 (YYDYYQPEAYVPSSDTYIEKDASI). Residues 430 to 592 (QVDDLLSEIK…ITPKSIQKAV (163 aa)) form the Helicase C-terminal domain. In terms of domain architecture, UVR spans 631-666 (AKELRKLEEQMYHHARNLEFEEAAAVRDKIQHIRKG).

Belongs to the UvrB family. In terms of assembly, forms a heterotetramer with UvrA during the search for lesions. Interacts with UvrC in an incision complex.

The protein localises to the cytoplasm. The UvrABC repair system catalyzes the recognition and processing of DNA lesions. A damage recognition complex composed of 2 UvrA and 2 UvrB subunits scans DNA for abnormalities. Upon binding of the UvrA(2)B(2) complex to a putative damaged site, the DNA wraps around one UvrB monomer. DNA wrap is dependent on ATP binding by UvrB and probably causes local melting of the DNA helix, facilitating insertion of UvrB beta-hairpin between the DNA strands. Then UvrB probes one DNA strand for the presence of a lesion. If a lesion is found the UvrA subunits dissociate and the UvrB-DNA preincision complex is formed. This complex is subsequently bound by UvrC and the second UvrB is released. If no lesion is found, the DNA wraps around the other UvrB subunit that will check the other stand for damage. The chain is UvrABC system protein B from Coxiella burnetii (strain CbuK_Q154) (Coxiella burnetii (strain Q154)).